A 171-amino-acid chain; its full sequence is Co-chaperone protein HscB (171 aa).

The region spanning 2 to 74 (DYFTLFGLPA…LTRAEYLLSL (73 aa)) is the J domain.

This sequence belongs to the HscB family. In terms of assembly, interacts with HscA and stimulates its ATPase activity. Interacts with IscU.

Co-chaperone involved in the maturation of iron-sulfur cluster-containing proteins. Seems to help targeting proteins to be folded toward HscA. This Salmonella typhimurium (strain LT2 / SGSC1412 / ATCC 700720) protein is Co-chaperone protein HscB.